The following is an 825-amino-acid chain: Ubiquitin carboxyl-terminal hydrolase 16 (825 aa).

Positions 1-20 (MGKKRTKGRSAPDTVASESA) are disordered. A UBP-type zinc finger spans residues 22 to 141 (PVCRHLRKGL…QVVDYVRKQA (120 aa)). Residues Cys-24, His-26, Cys-48, Cys-51, Cys-73, Cys-76, Cys-81, His-89, His-93, His-102, Cys-115, and Cys-118 each coordinate Zn(2+). Lys-139 participates in a covalent cross-link: Glycyl lysine isopeptide (Lys-Gly) (interchain with G-Cter in SUMO2). The segment covering 164 to 180 (EKESKNEQEREKSENLA) has biased composition (basic and acidic residues). The segment at 164–184 (EKESKNEQEREKSENLAKETI) is disordered. Ser-188 carries the post-translational modification Phosphoserine. The USP domain maps to 195–824 (KGLSNLGNTC…QAYLLFYERI (630 aa)). Cys-204 functions as the Nucleophile in the catalytic mechanism. Over residues 393–407 (SGKKSINDKNVKMTM) the composition is skewed to basic and acidic residues. The tract at residues 393–456 (SGKKSINDKN…KQAKNQRRQQ (64 aa)) is disordered. Acidic residues predominate over residues 408–419 (EEEDKDSEEEKD). Ser-414 bears the Phosphoserine mark. A compositionally biased stretch (basic residues) spans 436 to 456 (HLQKKAKKQAKKQAKNQRRQQ). A phosphoserine mark is found at Ser-520 and Ser-531. The active-site Proton acceptor is His-759.

This sequence belongs to the peptidase C19 family. USP16 subfamily. Homotetramer. Associates with late pre-40S ribosomes. Interacts with CEP78; promoting deubiquitination of tektins. Post-translationally, phosphorylated at the onset of mitosis and dephosphorylated during the metaphase/anaphase transition. Phosphorylation by AURKB enhances the deubiquitinase activity.

The protein localises to the nucleus. It localises to the cytoplasm. It carries out the reaction Thiol-dependent hydrolysis of ester, thioester, amide, peptide and isopeptide bonds formed by the C-terminal Gly of ubiquitin (a 76-residue protein attached to proteins as an intracellular targeting signal).. Functionally, specifically deubiquitinates 'Lys-120' of histone H2A (H2AK119Ub), a specific tag for epigenetic transcriptional repression, thereby acting as a coactivator. Deubiquitination of histone H2A is a prerequisite for subsequent phosphorylation at 'Ser-11' of histone H3 (H3S10ph), and is required for chromosome segregation when cells enter into mitosis. In resting B- and T-lymphocytes, phosphorylation by AURKB leads to enhance its activity, thereby maintaining transcription in resting lymphocytes. Regulates Hox gene expression via histone H2A deubiquitination. Prefers nucleosomal substrates. Does not deubiquitinate histone H2B. Also deubiquitinates non-histone proteins, such as ribosomal protein RPS27A: deubiquitination of monoubiquitinated RPS27A promotes maturation of the 40S ribosomal subunit. Also mediates deubiquitination of tektin proteins (TEKT1, TEKT2, TEK3, TEKT4 and TEKT5), promoting their stability. The polypeptide is Ubiquitin carboxyl-terminal hydrolase 16 (Usp16) (Mus musculus (Mouse)).